A 134-amino-acid polypeptide reads, in one-letter code: UPF0412 protein YaaI (134 aa).

Residues 1-23 form the signal peptide; it reads MKSVITISASLAISLMLCCTAQA.

This sequence belongs to the UPF0412 family.

This chain is UPF0412 protein YaaI, found in Escherichia coli (strain UTI89 / UPEC).